A 229-amino-acid chain; its full sequence is Large ribosomal subunit protein uL1 (229 aa).

It belongs to the universal ribosomal protein uL1 family. As to quaternary structure, part of the 50S ribosomal subunit.

Binds directly to 23S rRNA. The L1 stalk is quite mobile in the ribosome, and is involved in E site tRNA release. In terms of biological role, protein L1 is also a translational repressor protein, it controls the translation of the L11 operon by binding to its mRNA. The chain is Large ribosomal subunit protein uL1 from Listeria monocytogenes serovar 1/2a (strain ATCC BAA-679 / EGD-e).